The chain runs to 32 residues: Trypsin inhibitor 3 (32 aa).

Disulfide bonds link Cys-6-Cys-23, Cys-13-Cys-25, and Cys-19-Cys-31.

It belongs to the protease inhibitor I7 (squash-type serine protease inhibitor) family.

The protein resides in the secreted. Functionally, inhibits trypsin. The polypeptide is Trypsin inhibitor 3 (Cucurbita pepo (Vegetable marrow)).